The chain runs to 86 residues: Kappa-theraphotoxin-Cg1a 1 (86 aa).

An N-terminal signal peptide occupies residues 1–21; the sequence is MKVSVLITLAVLGVMFVWASA. The propeptide occupies 22-50; the sequence is AELEERGSDQRDSPAWLKSMERIFQSGER. Disulfide bonds link cysteine 52–cysteine 66, cysteine 59–cysteine 71, and cysteine 65–cysteine 78. The segment at 55–56 is involved in active face; sequence MF. Phenylalanine 84 carries the phenylalanine amide modification.

The protein belongs to the neurotoxin 10 (Hwtx-1) family. 28 (Jztx-11) subfamily. As to expression, expressed by the venom gland.

Its subcellular location is the secreted. Its function is as follows. This toxin acts as a voltage-dependent gating-modifier. It inhibits the sodium conductance (IC(50)=124 nM) and slows the fast inactivation (EC(50)=1180 nM) of Nav1.5/SCN5A. It significantly shifts the activation to more depolarized voltages and decreases the deactivation of Nav1.5 currents upon extreme depolarization, but only slightly affects voltage-dependence of steady-state inactivation. In addition, this toxin causes an approximately five-fold decrease in the rate of recovery from inactivation and an approximately 1.9-fold reduction in the closed-state inactivation rate. This toxin integrates the functions of site 3 toxins (alpha-scorpion toxins) with site 4 toxins (beta-scorpion and spider toxins) by targeting multiple sites on Nav1.5. Also shows inhibition of voltage-gated potassium channels (5 uM completely inhibits Kv2.1/KCNB1, whereas 5 uM moderately inhibits Kv4.2/KCND2 Kv4.1/KCND1 channels). The protein is Kappa-theraphotoxin-Cg1a 1 of Chilobrachys guangxiensis (Chinese earth tiger tarantula).